Reading from the N-terminus, the 161-residue chain is Endoribonuclease YbeY (161 aa).

Residues His-121, His-125, and His-131 each contribute to the Zn(2+) site.

The protein belongs to the endoribonuclease YbeY family. Zn(2+) serves as cofactor.

Its subcellular location is the cytoplasm. Its function is as follows. Single strand-specific metallo-endoribonuclease involved in late-stage 70S ribosome quality control and in maturation of the 3' terminus of the 16S rRNA. This chain is Endoribonuclease YbeY, found in Xanthomonas oryzae pv. oryzae (strain MAFF 311018).